A 271-amino-acid chain; its full sequence is Regulatory protein RecX (271 aa).

Belongs to the RecX family.

It localises to the cytoplasm. In terms of biological role, modulates RecA activity. The chain is Regulatory protein RecX from Lactobacillus johnsonii (strain CNCM I-12250 / La1 / NCC 533).